The sequence spans 483 residues: Cobyric acid synthase (483 aa).

The region spanning 248–435 (LLKVVVPVLP…LHGLFETPAA (188 aa)) is the GATase cobBQ-type domain. C329 (nucleophile) is an active-site residue. The active site involves H427.

This sequence belongs to the CobB/CobQ family. CobQ subfamily.

Its pathway is cofactor biosynthesis; adenosylcobalamin biosynthesis. Its function is as follows. Catalyzes amidations at positions B, D, E, and G on adenosylcobyrinic A,C-diamide. NH(2) groups are provided by glutamine, and one molecule of ATP is hydrogenolyzed for each amidation. The polypeptide is Cobyric acid synthase (Pseudomonas fluorescens (strain ATCC BAA-477 / NRRL B-23932 / Pf-5)).